The sequence spans 593 residues: Arginine--tRNA ligase (593 aa).

The short motif at 138-148 (ANPTGPLHVGH) is the 'HIGH' region element.

It belongs to the class-I aminoacyl-tRNA synthetase family. As to quaternary structure, monomer.

It localises to the cytoplasm. It catalyses the reaction tRNA(Arg) + L-arginine + ATP = L-arginyl-tRNA(Arg) + AMP + diphosphate. This chain is Arginine--tRNA ligase, found in Burkholderia lata (strain ATCC 17760 / DSM 23089 / LMG 22485 / NCIMB 9086 / R18194 / 383).